Reading from the N-terminus, the 179-residue chain is Nicotinamide-nucleotide adenylyltransferase (179 aa).

Belongs to the archaeal NMN adenylyltransferase family.

It is found in the cytoplasm. It carries out the reaction beta-nicotinamide D-ribonucleotide + ATP + H(+) = diphosphate + NAD(+). It functions in the pathway cofactor biosynthesis; NAD(+) biosynthesis; NAD(+) from nicotinamide D-ribonucleotide: step 1/1. The polypeptide is Nicotinamide-nucleotide adenylyltransferase (Thermoplasma acidophilum (strain ATCC 25905 / DSM 1728 / JCM 9062 / NBRC 15155 / AMRC-C165)).